A 750-amino-acid chain; its full sequence is MIIRSPEPEVKILVDRDPIKTSFEEWAKPGHFSRTIAKGPDTTTWIWNLHADAHDFDSHTSDLEEISRKVFSAHFGQLSIIFLWLSGMYFHGARFSNYEAWLSDPTHIGPSAQVVWPIVGQEILNGDVGGGFRGIQITSGFFQIWRASGITSELQLYCTAIGALVFAALMLFAGWFHYHKAAPKLAWFQDVESMLNHHLAGLLGLGSLSWAGHQVHVSLPINQFLNAGVDPKEIPLPHEFILNRDLLAQLYPSFAEGATPFFTLNWSKYSEFLTFRGGLDPVTGGLWLTDIAHHHLAIAILFLIAGHMYRTNWGIGHGIKDILEAHKGPFTGQGHKGLYEILTTLWHAQLSLNLAMLGSLTIVVAHHMYSMPPYPYLATDYATQLSLFTHHMWIGGFLIVGAAAHAAIFMVRDYDPTNRYNDLLDRVLRHRDAIISHLNWVCIFLGFHSFGLYIHNDTMSALGRPQDMFSDTAIQLQPVFAQWIQNTHALAPGVTAPGETASTSLTWGGGELVAVGGKVALLPIPLGTADFLVHHIHAFTIHVTVLILLKGVLFARSSRLIPDKANLGFRFPCDGPGRGGTCQVSAWDHVFLGLFWMYNAISVVIFHFSWKMQSDVWGSISDQGVVTHITGGNFAQSSITINGWLRDFLWAQASQVIQSYGSSLSAYGLFFLGAHFVWAFSLMFLFSGRGYWQELIESIVWAHNKLKVAPATQPRALSIVQGRAVGVTHYLLGGIATTWAFFLARIIAVG.

The next 8 membrane-spanning stretches (helical) occupy residues Val-70–Ala-93, Leu-156–His-179, Leu-195–Leu-219, Ile-291–Tyr-309, Trp-346–Tyr-369, Leu-385–Val-411, Ala-433–His-455, and Phe-531–Leu-549. Cys-573 and Cys-582 together coordinate [4Fe-4S] cluster. 2 helical membrane-spanning segments follow: residues His-589–Trp-610 and Leu-664–Phe-686. His-675 lines the chlorophyll a' pocket. The chlorophyll a site is built by Met-683 and Tyr-691. Trp-692 is a phylloquinone binding site. A helical membrane pass occupies residues Ala-724–Ala-744.

It belongs to the PsaA/PsaB family. In terms of assembly, the PsaA/B heterodimer binds the P700 chlorophyll special pair and subsequent electron acceptors. PSI consists of a core antenna complex that captures photons, and an electron transfer chain that converts photonic excitation into a charge separation. The eukaryotic PSI reaction center is composed of at least 11 subunits. The cofactor is P700 is a chlorophyll a/chlorophyll a' dimer, A0 is one or more chlorophyll a, A1 is one or both phylloquinones and FX is a shared 4Fe-4S iron-sulfur center..

Its subcellular location is the plastid. It localises to the chloroplast thylakoid membrane. The catalysed reaction is reduced [plastocyanin] + hnu + oxidized [2Fe-2S]-[ferredoxin] = oxidized [plastocyanin] + reduced [2Fe-2S]-[ferredoxin]. Functionally, psaA and PsaB bind P700, the primary electron donor of photosystem I (PSI), as well as the electron acceptors A0, A1 and FX. PSI is a plastocyanin-ferredoxin oxidoreductase, converting photonic excitation into a charge separation, which transfers an electron from the donor P700 chlorophyll pair to the spectroscopically characterized acceptors A0, A1, FX, FA and FB in turn. Oxidized P700 is reduced on the lumenal side of the thylakoid membrane by plastocyanin. The sequence is that of Photosystem I P700 chlorophyll a apoprotein A1 from Nasturtium officinale (Watercress).